Consider the following 587-residue polypeptide: Protein NRT1/ PTR FAMILY 2.9 (587 aa).

Helical transmembrane passes span 35 to 55, 65 to 85, 94 to 114, 135 to 155, 181 to 201, 209 to 229, 325 to 345, 368 to 388, 412 to 432, 457 to 477, 493 to 513, and 540 to 560; these read FEKL…TTVF, VVNI…FLCD, LSFA…TAVI, IGQI…AGGI, FFNW…TLIV, WSIG…IFFA, CVIR…AYIQ, IPAG…IPIY, VGAG…VEQY, GMWL…AGVG, FAGS…TFLL, and YFYF…LLVS.

Belongs to the major facilitator superfamily. Proton-dependent oligopeptide transporter (POT/PTR) (TC 2.A.17) family. In terms of tissue distribution, expressed in roots, stems and major veins of the leaves. Detected in the companion cells of the root phloem.

The protein resides in the cell membrane. Its function is as follows. Low-affinity nitrate transporter facilitating nitrate loading into root phloem. Not involved in dipeptides transport, but has a weak glucosinolate transport activity. In Arabidopsis thaliana (Mouse-ear cress), this protein is Protein NRT1/ PTR FAMILY 2.9 (NPF2.9).